Consider the following 360-residue polypeptide: Alanine racemase (360 aa).

The Proton acceptor; specific for D-alanine role is filled by Lys-34. Lys-34 bears the N6-(pyridoxal phosphate)lysine mark. Arg-129 contributes to the substrate binding site. Catalysis depends on Tyr-254, which acts as the Proton acceptor; specific for L-alanine. Residue Met-302 coordinates substrate.

It belongs to the alanine racemase family. Pyridoxal 5'-phosphate serves as cofactor.

It carries out the reaction L-alanine = D-alanine. It functions in the pathway amino-acid biosynthesis; D-alanine biosynthesis; D-alanine from L-alanine: step 1/1. Functionally, catalyzes the interconversion of L-alanine and D-alanine. May also act on other amino acids. The protein is Alanine racemase (alr) of Pectobacterium carotovorum subsp. carotovorum (strain PC1).